Reading from the N-terminus, the 337-residue chain is Protein-methionine-sulfoxide reductase catalytic subunit MsrP (337 aa).

The segment at residues Met1–Ala54 is a signal peptide (tat-type signal). Mo-molybdopterin contacts are provided by residues Asn94, Tyr97–Glu98, Cys152, Thr187, Asn237, Arg242, and Ser253–Lys255.

The protein belongs to the MsrP family. As to quaternary structure, heterodimer of a catalytic subunit (MsrP) and a heme-binding subunit (MsrQ). Mo-molybdopterin is required as a cofactor. In terms of processing, predicted to be exported by the Tat system. The position of the signal peptide cleavage has not been experimentally proven.

The protein resides in the periplasm. The enzyme catalyses L-methionyl-[protein] + a quinone + H2O = L-methionyl-(S)-S-oxide-[protein] + a quinol. The catalysed reaction is L-methionyl-[protein] + a quinone + H2O = L-methionyl-(R)-S-oxide-[protein] + a quinol. Its function is as follows. Part of the MsrPQ system that repairs oxidized periplasmic proteins containing methionine sulfoxide residues (Met-O), using respiratory chain electrons. Thus protects these proteins from oxidative-stress damage caused by reactive species of oxygen and chlorine generated by the host defense mechanisms. MsrPQ is essential for the maintenance of envelope integrity under bleach stress, rescuing a wide series of structurally unrelated periplasmic proteins from methionine oxidation. The catalytic subunit MsrP is non-stereospecific, being able to reduce both (R-) and (S-) diastereoisomers of methionine sulfoxide. In Pseudomonas putida (strain ATCC 47054 / DSM 6125 / CFBP 8728 / NCIMB 11950 / KT2440), this protein is Protein-methionine-sulfoxide reductase catalytic subunit MsrP.